The sequence spans 426 residues: Serine--tRNA ligase (426 aa).

The segment at 36 to 66 (KRRHLQERTQDLQSQRNTISKEIGQKKAKGE) is disordered. Residues 46–55 (DLQSQRNTIS) show a composition bias toward polar residues. Position 233–235 (233–235 (TAE)) interacts with L-serine. An ATP-binding site is contributed by 264–266 (RSE). L-serine is bound at residue Glu287. 351–354 (EISS) lines the ATP pocket. Ser387 lines the L-serine pocket.

It belongs to the class-II aminoacyl-tRNA synthetase family. Type-1 seryl-tRNA synthetase subfamily. In terms of assembly, homodimer. The tRNA molecule binds across the dimer.

The protein resides in the cytoplasm. It catalyses the reaction tRNA(Ser) + L-serine + ATP = L-seryl-tRNA(Ser) + AMP + diphosphate + H(+). The catalysed reaction is tRNA(Sec) + L-serine + ATP = L-seryl-tRNA(Sec) + AMP + diphosphate + H(+). It functions in the pathway aminoacyl-tRNA biosynthesis; selenocysteinyl-tRNA(Sec) biosynthesis; L-seryl-tRNA(Sec) from L-serine and tRNA(Sec): step 1/1. Functionally, catalyzes the attachment of serine to tRNA(Ser). Is also able to aminoacylate tRNA(Sec) with serine, to form the misacylated tRNA L-seryl-tRNA(Sec), which will be further converted into selenocysteinyl-tRNA(Sec). The polypeptide is Serine--tRNA ligase (Francisella tularensis subsp. novicida (strain U112)).